The chain runs to 456 residues: Glycine--tRNA ligase (456 aa).

Positions 98 and 168 each coordinate substrate. ATP contacts are provided by residues 200–202, 210–215, 285–286, and 329–332; these read RNE, FRTREF, EL, and GVER. 215–219 provides a ligand contact to substrate; it reads FEQME. 325–329 provides a ligand contact to substrate; that stretch reads EPSVG.

Belongs to the class-II aminoacyl-tRNA synthetase family. Homodimer.

It is found in the cytoplasm. The catalysed reaction is tRNA(Gly) + glycine + ATP = glycyl-tRNA(Gly) + AMP + diphosphate. Its function is as follows. Catalyzes the attachment of glycine to tRNA(Gly). The protein is Glycine--tRNA ligase of Mycoplasma mycoides subsp. mycoides SC (strain CCUG 32753 / NCTC 10114 / PG1).